The chain runs to 344 residues: Methionine import ATP-binding protein MetN 1 (344 aa).

The region spanning 2 to 241 is the ABC transporter domain; sequence IELRNLSQRF…PHHEVTRALI (240 aa). Residue 38–45 coordinates ATP; it reads GRSGAGKS.

The protein belongs to the ABC transporter superfamily. Methionine importer (TC 3.A.1.24) family. The complex is composed of two ATP-binding proteins (MetN), two transmembrane proteins (MetI) and a solute-binding protein (MetQ).

It localises to the cell inner membrane. It catalyses the reaction L-methionine(out) + ATP + H2O = L-methionine(in) + ADP + phosphate + H(+). The catalysed reaction is D-methionine(out) + ATP + H2O = D-methionine(in) + ADP + phosphate + H(+). In terms of biological role, part of the ABC transporter complex MetNIQ involved in methionine import. Responsible for energy coupling to the transport system. The polypeptide is Methionine import ATP-binding protein MetN 1 (Burkholderia ambifaria (strain ATCC BAA-244 / DSM 16087 / CCUG 44356 / LMG 19182 / AMMD) (Burkholderia cepacia (strain AMMD))).